The sequence spans 300 residues: LysM and putative peptidoglycan-binding domain-containing protein 3 (300 aa).

At 1–216 (MAGRNQNRTA…PYYGADWGMG (216 aa)) the chain is on the extracellular side. N-linked (GlcNAc...) asparagine glycosylation is found at Asn7 and Asn26. Ser55 carries the post-translational modification Phosphoserine. The 45-residue stretch at 65 to 109 (LTKDIQEGDTLNAVALQYCCTVADIKRVNNLISDQDFFALRSIKI) folds into the LysM domain. The disordered stretch occupies residues 136–157 (PYFQEQDTVPANDSPSSSESAG). Residues 140-156 (EQDTVPANDSPSSSESA) are compositionally biased toward polar residues. Asn199 is a glycosylation site (N-linked (GlcNAc...) asparagine). A helical transmembrane segment spans residues 217–237 (WWTAVVIMLIVGIITPVFYLL). Over 238-300 (YYEILAKVDV…LYRQDPQARD (63 aa)) the chain is Cytoplasmic. The interval 253–300 (VDSSHLHPGLTPPSHHREMGNAIGPTKGIPVGQQDDHRLYRQDPQARD) is disordered. Residues 286–300 (QDDHRLYRQDPQARD) show a composition bias toward basic and acidic residues.

The protein resides in the cell membrane. It is found in the golgi apparatus. Essential for Golgi structural integrity. The chain is LysM and putative peptidoglycan-binding domain-containing protein 3 (Lysmd3) from Rattus norvegicus (Rat).